Here is a 427-residue protein sequence, read N- to C-terminus: Enolase (427 aa).

Gln162 is a (2R)-2-phosphoglycerate binding site. Residue Glu204 is the Proton donor of the active site. Mg(2+) contacts are provided by Asp241, Glu282, and Asp309. Lys334, Arg363, Ser364, and Lys385 together coordinate (2R)-2-phosphoglycerate. Catalysis depends on Lys334, which acts as the Proton acceptor.

The protein belongs to the enolase family. Mg(2+) is required as a cofactor.

It localises to the cytoplasm. The protein localises to the secreted. Its subcellular location is the cell surface. The catalysed reaction is (2R)-2-phosphoglycerate = phosphoenolpyruvate + H2O. The protein operates within carbohydrate degradation; glycolysis; pyruvate from D-glyceraldehyde 3-phosphate: step 4/5. Catalyzes the reversible conversion of 2-phosphoglycerate (2-PG) into phosphoenolpyruvate (PEP). It is essential for the degradation of carbohydrates via glycolysis. The chain is Enolase from Frankia casuarinae (strain DSM 45818 / CECT 9043 / HFP020203 / CcI3).